The following is a 288-amino-acid chain: Sulfur carrier protein FdhD (288 aa).

The active-site Cysteine persulfide intermediate is C122. A Mo-bis(molybdopterin guanine dinucleotide)-binding site is contributed by 268 to 273 (FVRGER).

Belongs to the FdhD family.

Its subcellular location is the cytoplasm. In terms of biological role, required for formate dehydrogenase (FDH) activity. Acts as a sulfur carrier protein that transfers sulfur from IscS to the molybdenum cofactor prior to its insertion into FDH. This Anaeromyxobacter dehalogenans (strain 2CP-1 / ATCC BAA-258) protein is Sulfur carrier protein FdhD.